The following is a 43-amino-acid chain: Protein PsbN (43 aa).

A helical membrane pass occupies residues 7–29 (VTIFLSGLLVSFTGYALYTAFGQ).

This sequence belongs to the PsbN family.

The protein resides in the plastid. It is found in the chloroplast thylakoid membrane. Its function is as follows. May play a role in photosystem I and II biogenesis. The sequence is that of Protein PsbN from Ipomoea purpurea (Common morning glory).